The sequence spans 230 residues: Thymidylate kinase (230 aa).

20-27 (GGEGSGKS) is an ATP binding site.

It belongs to the thymidylate kinase family.

It carries out the reaction dTMP + ATP = dTDP + ADP. Phosphorylation of dTMP to form dTDP in both de novo and salvage pathways of dTTP synthesis. This chain is Thymidylate kinase, found in Nitrobacter hamburgensis (strain DSM 10229 / NCIMB 13809 / X14).